Reading from the N-terminus, the 782-residue chain is DNA repair and recombination protein RAD54-like (782 aa).

A compositionally biased stretch (polar residues) spans 1–20 (MRRSLAPSQRGGQRLSSRND). The tract at residues 1–28 (MRRSLAPSQRGGQRLSSRNDFTPPLLKK) is disordered. Residues 2 to 9 (RRSLAPSQ) form a required for chromatin remodeling, strand pairing activities and coupling of ATPase activity region. At threonine 22 the chain carries Phosphothreonine. In terms of domain architecture, Helicase ATP-binding spans 168–343 (EGKRGNFNGC…FSLVNFVNPE (176 aa)). 181-188 (DEMGLGKT) contributes to the ATP binding site. The DEGH box motif lies at 294-297 (DEGH). Residues 501 to 658 (LLDFMLAAIR…NNESAEKHFT (158 aa)) form the Helicase C-terminal domain. Over residues 741 to 753 (SQKIEATPATETS) the composition is skewed to polar residues. Residues 741–782 (SQKIEATPATETSVEAKLEPERRKRPAMPLSDDSADEDFQGF) are disordered. Positions 773 to 782 (DSADEDFQGF) are enriched in acidic residues.

Belongs to the SNF2/RAD54 helicase family. As to quaternary structure, interacts (via N-terminus) with spn-A/Rad51.

It is found in the nucleus. In terms of biological role, involved in mitotic DNA repair and meiotic recombination. Functions in the recombinational DNA repair pathway. Essential for interhomolog gene conversion (GC), but may have a less important role in intersister GC than spn-A/Rad51. In the presence of DNA, spn-A/Rad51 enhances the ATPase activity of okr/Rad54. The sequence is that of DNA repair and recombination protein RAD54-like from Drosophila persimilis (Fruit fly).